A 185-amino-acid chain; its full sequence is Thymidine kinase (185 aa).

ATP-binding positions include 7–14 and 83–86; these read GPMFAGKT and DEIQ. The active-site Proton acceptor is the E84. Positions 139, 142, 177, and 180 each coordinate Zn(2+).

This sequence belongs to the thymidine kinase family. Homotetramer.

It is found in the cytoplasm. It catalyses the reaction thymidine + ATP = dTMP + ADP + H(+). The polypeptide is Thymidine kinase (Pyrobaculum aerophilum (strain ATCC 51768 / DSM 7523 / JCM 9630 / CIP 104966 / NBRC 100827 / IM2)).